A 194-amino-acid polypeptide reads, in one-letter code: Outer membrane protein A (194 aa).

The N-terminal stretch at Met-1 to Ala-24 is a signal peptide. A beta stranded transmembrane segment spans residues Trp-30–Trp-38. Positions Met-77–Arg-193 constitute an OmpA-like domain.

Belongs to the outer membrane OOP (TC 1.B.6) superfamily.

It is found in the cell outer membrane. Functionally, structural protein that may protect the integrity of the bacterium. The protein is Outer membrane protein A of Bordetella avium.